We begin with the raw amino-acid sequence, 180 residues long: Vacuolar ATPase assembly protein VMA22 (180 aa).

Positions Gln-4–Gly-38 form a coiled coil. The disordered stretch occupies residues Thr-90–Leu-113.

As to quaternary structure, accessory component of the multisubunit proton-transporting vacuolar (V)-ATPase protein pump. In terms of tissue distribution, predominantly expressed in the heart, liver, kidney and testis and at lower levels in the brain and lung. Undetectable in the spleen and muscles.

It is found in the endosome. It localises to the lysosome. The protein resides in the endoplasmic reticulum-Golgi intermediate compartment. The protein localises to the cytoplasmic vesicle. Its subcellular location is the COPI-coated vesicle. It is found in the endoplasmic reticulum. Functionally, accessory component of the proton-transporting vacuolar (V)-ATPase protein pump involved in intracellular iron homeostasis. In aerobic conditions, required for intracellular iron homeostasis, thus triggering the activity of Fe(2+) prolyl hydroxylase (PHD) enzymes, and leading to HIF1A hydroxylation and subsequent proteasomal degradation. Necessary for endolysosomal acidification and lysosomal degradation. May be involved in Golgi homeostasis. The sequence is that of Vacuolar ATPase assembly protein VMA22 (Vma22) from Mus musculus (Mouse).